Here is a 1014-residue protein sequence, read N- to C-terminus: Valine--tRNA ligase (1014 aa).

Residues 49–59 (PNVTGSLHMGH) carry the 'HIGH' region motif. A 'KMSKS' region motif is present at residues 542–546 (KMSKS). Residue lysine 545 coordinates ATP. A coiled-coil region spans residues 947–1014 (VVDIETLRAK…ILRLRLQTLV (68 aa)).

The protein belongs to the class-I aminoacyl-tRNA synthetase family. ValS type 1 subfamily. Monomer.

The protein resides in the cytoplasm. It catalyses the reaction tRNA(Val) + L-valine + ATP = L-valyl-tRNA(Val) + AMP + diphosphate. Its function is as follows. Catalyzes the attachment of valine to tRNA(Val). As ValRS can inadvertently accommodate and process structurally similar amino acids such as threonine, to avoid such errors, it has a 'posttransfer' editing activity that hydrolyzes mischarged Thr-tRNA(Val) in a tRNA-dependent manner. In Nostoc sp. (strain PCC 7120 / SAG 25.82 / UTEX 2576), this protein is Valine--tRNA ligase.